Consider the following 557-residue polypeptide: Kelch repeat and BTB domain-containing protein 2 (557 aa).

One can recognise a BTB domain in the interval 26–95; that stretch reads CDVIITIGDG…LYNRHISSMN (70 aa). The region spanning 133–223 is the BACK domain; it reads HKLYEMVHIP…CIDIQNLDKK (91 aa). Kelch repeat units follow at residues 305–352, 353–399, and 401–464; these read EIII…VIDD, TIYA…VLDQ, and IYII…SHKD.

Interacts (via BTB domain) with host CUL3.

It is found in the host cytoplasm. Probable substrate-specific adapter of CUL3-containing E3 ubiquitin-protein ligases which mediate the ubiquitination and subsequent proteasomal degradation of host target proteins. This chain is Kelch repeat and BTB domain-containing protein 2 (KBTB2), found in Bos taurus (Bovine).